A 302-amino-acid chain; its full sequence is Glycine--tRNA ligase alpha subunit (302 aa).

The protein belongs to the class-II aminoacyl-tRNA synthetase family. As to quaternary structure, tetramer of two alpha and two beta subunits.

Its subcellular location is the cytoplasm. It carries out the reaction tRNA(Gly) + glycine + ATP = glycyl-tRNA(Gly) + AMP + diphosphate. This chain is Glycine--tRNA ligase alpha subunit, found in Edwardsiella ictaluri (strain 93-146).